We begin with the raw amino-acid sequence, 168 residues long: NADH-quinone oxidoreductase subunit B (168 aa).

Residues Cys-49, Cys-50, Cys-114, and Cys-144 each contribute to the [4Fe-4S] cluster site.

It belongs to the complex I 20 kDa subunit family. In terms of assembly, NDH-1 is composed of 14 different subunits. Subunits NuoB, C, D, E, F, and G constitute the peripheral sector of the complex. [4Fe-4S] cluster serves as cofactor.

It localises to the cell membrane. It carries out the reaction a quinone + NADH + 5 H(+)(in) = a quinol + NAD(+) + 4 H(+)(out). Functionally, NDH-1 shuttles electrons from NADH, via FMN and iron-sulfur (Fe-S) centers, to quinones in the respiratory chain. Couples the redox reaction to proton translocation (for every two electrons transferred, four hydrogen ions are translocated across the cytoplasmic membrane), and thus conserves the redox energy in a proton gradient. The protein is NADH-quinone oxidoreductase subunit B of Wolbachia pipientis wMel.